A 503-amino-acid chain; its full sequence is Alpha-1,3/1,6-mannosyltransferase ALG2 (503 aa).

The next 2 membrane-spanning stretches (helical) occupy residues 64–84 (VYGDFLPTNFLGRFFIVFATI) and 112–132 (TCIPLLHIFSSATLMFYCHFP). 4 N-linked (GlcNAc...) asparagine glycosylation sites follow: Asn-170, Asn-303, Asn-371, and Asn-400. Residues 443 to 463 (WEIFGISFSNFILHMAFIKIL) form a helical membrane-spanning segment.

Belongs to the glycosyltransferase group 1 family. Glycosyltransferase 4 subfamily. In terms of assembly, interacts with ALG1.

The protein resides in the endoplasmic reticulum membrane. It catalyses the reaction a beta-D-Man-(1-&gt;4)-beta-D-GlcNAc-(1-&gt;4)-alpha-D-GlcNAc-diphospho-di-trans,poly-cis-dolichol + GDP-alpha-D-mannose = an alpha-D-Man-(1-&gt;3)-beta-D-Man-(1-&gt;4)-beta-D-GlcNAc-(1-&gt;4)-alpha-D-GlcNAc-diphospho-di-trans,poly-cis-dolichol + GDP + H(+). The catalysed reaction is an alpha-D-Man-(1-&gt;3)-beta-D-Man-(1-&gt;4)-beta-D-GlcNAc-(1-&gt;4)-alpha-D-GlcNAc-diphospho-di-trans,poly-cis-dolichol + GDP-alpha-D-mannose = an alpha-D-Man-(1-&gt;3)-[alpha-D-Man-(1-&gt;6)]-beta-D-Man-(1-&gt;4)-beta-D-GlcNAc-(1-&gt;4)-alpha-D-GlcNAc-diphospho-di-trans,poly-cis-dolichol + GDP + H(+). Its pathway is protein modification; protein glycosylation. Mannosylates Man(2)GlcNAc(2)-dolichol diphosphate and Man(1)GlcNAc(2)-dolichol diphosphate to form Man(3)GlcNAc(2)-dolichol diphosphate. This Saccharomyces cerevisiae (strain ATCC 204508 / S288c) (Baker's yeast) protein is Alpha-1,3/1,6-mannosyltransferase ALG2 (ALG2).